The following is a 301-amino-acid chain: MEEKEFKSGFVALLGRPNVGKSTLMNYLVGQKVAITSNKPQTTRNRISGIYTSDKMQVVFVDTPGIFKPHSKLDDYMDKASLSSLNDVDLVLFMVEPEEIGKGDQYIANLLKEVKVPVFLVINKVDQIHPNKLLLIMDSYHKLEGFKEILPISATQGIGIEDLLNTINKYLPEGPQYYGADQITDRPEYFVVAELIREQILRLTSQEVPHATAVAVDQMNKHQNGKLLIEATIYVEKDGQKGIIIGKGGKMLKQIGINSRKEIEHLLGEKVNLRLWVKVQHNWRSDPSFLKQIGYDKKELS.

The Era-type G domain occupies 7 to 173 (KSGFVALLGR…LNTINKYLPE (167 aa)). A G1 region spans residues 15–22 (GRPNVGKS). 15–22 (GRPNVGKS) contacts GTP. The G2 stretch occupies residues 41–45 (QTTRN). Residues 62 to 65 (DTPG) are G3. GTP contacts are provided by residues 62–66 (DTPGI) and 123–126 (NKVD). The tract at residues 123 to 126 (NKVD) is G4. A G5 region spans residues 152–154 (ISA). The KH type-2 domain maps to 204 to 281 (TSQEVPHATA…NLRLWVKVQH (78 aa)).

Belongs to the TRAFAC class TrmE-Era-EngA-EngB-Septin-like GTPase superfamily. Era GTPase family. Monomer.

The protein localises to the cytoplasm. It localises to the cell membrane. In terms of biological role, an essential GTPase that binds both GDP and GTP, with rapid nucleotide exchange. Plays a role in 16S rRNA processing and 30S ribosomal subunit biogenesis and possibly also in cell cycle regulation and energy metabolism. The polypeptide is GTPase Era (Lactobacillus helveticus (strain DPC 4571)).